A 355-amino-acid chain; its full sequence is Histidinol-phosphate aminotransferase (355 aa).

K218 bears the N6-(pyridoxal phosphate)lysine mark.

This sequence belongs to the class-II pyridoxal-phosphate-dependent aminotransferase family. Histidinol-phosphate aminotransferase subfamily. As to quaternary structure, homodimer. Pyridoxal 5'-phosphate is required as a cofactor.

It carries out the reaction L-histidinol phosphate + 2-oxoglutarate = 3-(imidazol-4-yl)-2-oxopropyl phosphate + L-glutamate. It participates in amino-acid biosynthesis; L-histidine biosynthesis; L-histidine from 5-phospho-alpha-D-ribose 1-diphosphate: step 7/9. The sequence is that of Histidinol-phosphate aminotransferase from Chlorobium limicola (strain DSM 245 / NBRC 103803 / 6330).